A 496-amino-acid polypeptide reads, in one-letter code: Glutamate--tRNA ligase (496 aa).

Positions P12–L22 match the 'HIGH' region motif. The 'KMSKS' region motif lies at K256–R260. K259 lines the ATP pocket.

The protein belongs to the class-I aminoacyl-tRNA synthetase family. Glutamate--tRNA ligase type 1 subfamily. Monomer.

The protein resides in the cytoplasm. It catalyses the reaction tRNA(Glu) + L-glutamate + ATP = L-glutamyl-tRNA(Glu) + AMP + diphosphate. Catalyzes the attachment of glutamate to tRNA(Glu) in a two-step reaction: glutamate is first activated by ATP to form Glu-AMP and then transferred to the acceptor end of tRNA(Glu). In Mycobacteroides abscessus (strain ATCC 19977 / DSM 44196 / CCUG 20993 / CIP 104536 / JCM 13569 / NCTC 13031 / TMC 1543 / L948) (Mycobacterium abscessus), this protein is Glutamate--tRNA ligase.